The following is a 681-amino-acid chain: MSAFPISDIGGSWEYSHAPPTATSATGIPGFPEQSVGGLQLPFPGYTYVGASPLTQPRRHFPNSTPVLGNYAGLSSDREVIATSLNPYISKFSANAEWPISDIHQSKKSVYIPEERDVSNQFQTDKQQQQQFMKLPDPQMQVQLCDKELWDQFSRAGTEMIVTKTGRRMFPGYRIKISGLDPTAKYCVMLDIVNVDDHRYKFQHGEWTVAGRGEPHLPQRFFLHPNSPANGSKWMSEIISFHKVKLTNSIGRDVDGKIVLNSMHRYQPRVHIVRTDDISSVHMQRLCTFAFPQTVFITVTAYQNSEVTKLKIDNNPFAKGFREDGARAKKPRNQHNHFSDNDTSPYSEQRRSYYEPGSYTHLPYYNNSPMNVPSHHHYDNQTMNREFLPEAKRNRIMPESNSIHAPSLSVFHPGNENAVSQWQDVPDLNEMYNANDNNYNSVANQSIHNVQYTQNGITSHSPVQPVPHDNSFTYYNSSSPSSSDSNQSNVNASFSVMTTTHASHSINDIMRISEHADVTSPNINIPNTVETNVHSSDSGIGSSPPTPSDDDASNLIPGTEEIFKDDGKVLDGENLPDMSDLISLTERKESGEANANSHTEDFSRNPACQSGDTIESKDIQTLQVASVTDTYSYQKNYVENSSHQSYNNSQEFSYHSNAMPESNCESSVDPNLDWESNLLTM.

Positions 149-323 (LWDQFSRAGT…NNPFAKGFRE (175 aa)) form a DNA-binding region, T-box. 4 disordered regions span residues 316–351 (PFAK…EQRR), 456–489 (GITS…NQSN), 521–558 (PNIN…LIPG), and 589–611 (ESGE…CQSG). A compositionally biased stretch (low complexity) spans 470–489 (NSFTYYNSSSPSSSDSNQSN). Over residues 521–534 (PNINIPNTVETNVH) the composition is skewed to polar residues.

Monomer. As to expression, differentiating muscle and tailbud tip.

Its subcellular location is the nucleus. In terms of biological role, involved in the transcriptional regulation of genes required for muscle differentiation. Binds to a palindromic site (called T site) and activates gene transcription when bound to such a site. This Halocynthia roretzi (Sea squirt) protein is T-box-containing protein 2 (T2).